Reading from the N-terminus, the 206-residue chain is Thymidylate kinase (206 aa).

Residue 11 to 18 (GIDGAGKT) coordinates ATP.

This sequence belongs to the thymidylate kinase family.

The catalysed reaction is dTMP + ATP = dTDP + ADP. Its function is as follows. Phosphorylation of dTMP to form dTDP in both de novo and salvage pathways of dTTP synthesis. This Burkholderia cenocepacia (strain ATCC BAA-245 / DSM 16553 / LMG 16656 / NCTC 13227 / J2315 / CF5610) (Burkholderia cepacia (strain J2315)) protein is Thymidylate kinase.